The sequence spans 503 residues: Probable apyrase 4 (503 aa).

Residues 1-14 (MQRSNARSRSNINS) are compositionally biased toward low complexity. The segment at 1 to 39 (MQRSNARSRSNINSDMVDPPEVQTSPGNHRSSPSTAAKP) is disordered. The Cytoplasmic portion of the chain corresponds to 1-45 (MQRSNARSRSNINSDMVDPPEVQTSPGNHRSSPSTAAKPKSKRTK). A helical; Signal-anchor for type II membrane protein membrane pass occupies residues 46–66 (SIIFVIVACVTIALGLLFIGY). Residues 67 to 503 (SILRSGRNRR…DLSNVAKYKI (437 aa)) lie on the Extracellular side of the membrane. Residue 83 to 93 (VIIDGGSSGTR) coordinates ATP. The active-site Proton acceptor is the Glu206. 230 to 240 (GIVELGGASAQ) contributes to the ATP binding site. Asn261, Asn293, and Asn338 each carry an N-linked (GlcNAc...) asparagine glycan.

Belongs to the GDA1/CD39 NTPase family. The cofactor is Ca(2+). Expressed both in the primary root and lateral root but not in the rosette leaves.

Its subcellular location is the membrane. It carries out the reaction a ribonucleoside 5'-triphosphate + 2 H2O = a ribonucleoside 5'-phosphate + 2 phosphate + 2 H(+). In terms of biological role, catalyzes the hydrolysis of phosphoanhydride bonds of nucleoside tri- and di-phosphates. The sequence is that of Probable apyrase 4 (APY4) from Arabidopsis thaliana (Mouse-ear cress).